The sequence spans 217 residues: GTP-binding protein Rit2 (217 aa).

GTP is bound by residues 27 to 34, 74 to 78, and 133 to 136; these read GAGGVGKS, DTAGQ, and NKID.

It belongs to the small GTPase superfamily. Ras family. As to quaternary structure, interacts with PLXNB3. Interacts with AFDN, the C-terminal domain of RALGDS and RLF, but not with RIN1 and PIK3CA. RLF binds exclusively to the active GTP-bound form. Binds calmodulin. Interacts with POU4F1 (via N-terminus); the interaction controls POU4F1 transactivation activity on some neuronal target genes. Expressed in ganglion cell layer (GCL), inner plexiform layer (IPL) and inner nuclear layer (INL) of the retina. Expressed in retinal ganglion cells (RGCs). Expressed in horizontal, bipolar and amacrine cells, but not Mueller glia, of the INL (at protein level). Neuron-specific. Expressed in ganglion cell layer (GCL) and inner plexiform layer (IPL).

The protein resides in the nucleus. It is found in the cell membrane. The enzyme catalyses GTP + H2O = GDP + phosphate + H(+). With respect to regulation, alternates between an inactive form bound to GDP and an active form bound to GTP. Its function is as follows. Binds and exchanges GTP and GDP. Binds and modulates the activation of POU4F1 as gene expression regulator. This chain is GTP-binding protein Rit2 (Rit2), found in Mus musculus (Mouse).